The following is a 725-amino-acid chain: Another transcription unit protein (725 aa).

The span at 1 to 10 (MGSQNSDDDS) shows a compositional bias: acidic residues. Disordered stretches follow at residues 1–379 (MGSQ…PETR), 566–603 (RQAMRNQHKSLPKKKKPGAGEPLIGGGTSSYQHDEGSD), and 617–725 (YKKG…SDND). The segment covering 11-70 (GSSGSSRSGSRSVTPQGGSAPGSQRSRRSGSGSDRSRSGSRSSRSRSGSGSPRSARSGSA) has biased composition (low complexity). Positions 82–101 (RSKRSRSAHSRRSGSARSRK) are enriched in basic residues. Residues 104-116 (TPESPQSHRSGSL) are compositionally biased toward polar residues. Low complexity predominate over residues 117–140 (QSRKSGSPQSRRSGSPQSRKSGST). Residues 141-160 (HSRRSGSAHSRRSGSARSRK) are compositionally biased toward basic residues. Phosphoserine occurs at positions 175, 186, 188, and 190. The segment covering 206-223 (SRSRSRSRSGSRTSRSRS) has biased composition (basic residues). The span at 224–242 (KTGTPSPNRSRSGSASGSG) shows a compositional bias: low complexity. 3 positions are modified to phosphoserine: serine 265, serine 267, and serine 269. Phosphothreonine is present on threonine 286. Serine 288, serine 290, and serine 312 each carry phosphoserine. Over residues 306-318 (GDADDISDDEDEA) the composition is skewed to acidic residues. The span at 325-353 (SPVRSKSRSQSKSHSHSRSMSHSRSRSRS) shows a compositional bias: basic residues. Basic and acidic residues predominate over residues 354–369 (RSRDKVESQVESAPKE). Serine 355 carries the phosphoserine modification. The span at 571–582 (NQHKSLPKKKKP) shows a compositional bias: basic residues. Threonine 593 bears the Phosphothreonine mark. Phosphoserine is present on residues serine 595, serine 602, and serine 631. At threonine 632 the chain carries Phosphothreonine. A phosphoserine mark is found at serine 635, serine 636, and serine 642. Residues 644–665 (FEARRSKKVDKAKASKALRDSD) are compositionally biased toward basic and acidic residues. Residues 710–725 (SGSGSGSGSGSGSDND) show a composition bias toward gly residues.

This is Another transcription unit protein (Atu) from Drosophila melanogaster (Fruit fly).